We begin with the raw amino-acid sequence, 277 residues long: Large ribosomal subunit protein uL2 (277 aa).

Disordered stretches follow at residues 38 to 58 and 219 to 277; these read HRKG…GGGH and TVRG…RKNK.

The protein belongs to the universal ribosomal protein uL2 family. Part of the 50S ribosomal subunit. Forms a bridge to the 30S subunit in the 70S ribosome.

One of the primary rRNA binding proteins. Required for association of the 30S and 50S subunits to form the 70S ribosome, for tRNA binding and peptide bond formation. It has been suggested to have peptidyltransferase activity; this is somewhat controversial. Makes several contacts with the 16S rRNA in the 70S ribosome. This Bacillus pumilus (strain SAFR-032) protein is Large ribosomal subunit protein uL2.